A 133-amino-acid chain; its full sequence is Large ribosomal subunit protein uL22 (133 aa).

This sequence belongs to the universal ribosomal protein uL22 family. As to quaternary structure, part of the 50S ribosomal subunit.

Functionally, this protein binds specifically to 23S rRNA; its binding is stimulated by other ribosomal proteins, e.g. L4, L17, and L20. It is important during the early stages of 50S assembly. It makes multiple contacts with different domains of the 23S rRNA in the assembled 50S subunit and ribosome. Its function is as follows. The globular domain of the protein is located near the polypeptide exit tunnel on the outside of the subunit, while an extended beta-hairpin is found that lines the wall of the exit tunnel in the center of the 70S ribosome. This is Large ribosomal subunit protein uL22 from Aquifex aeolicus (strain VF5).